Consider the following 552-residue polypeptide: Urocanate hydratase (552 aa).

Residues 49–50, Gln127, 173–175, Asp193, 239–240, 260–264, 270–271, and Tyr319 contribute to the NAD(+) site; these read GG, GMG, NA, QTSAH, and YI. Cys407 is a catalytic residue. Gly489 contributes to the NAD(+) binding site.

The protein belongs to the urocanase family. NAD(+) serves as cofactor.

It localises to the cytoplasm. It catalyses the reaction 4-imidazolone-5-propanoate = trans-urocanate + H2O. Its pathway is amino-acid degradation; L-histidine degradation into L-glutamate; N-formimidoyl-L-glutamate from L-histidine: step 2/3. Its function is as follows. Catalyzes the conversion of urocanate to 4-imidazolone-5-propionate. In Bacillus thuringiensis (strain Al Hakam), this protein is Urocanate hydratase.